A 351-amino-acid chain; its full sequence is Adenine deaminase (351 aa).

Zn(2+) is bound by residues His-20, His-22, and His-200. Residue Glu-203 is the Proton donor of the active site. Asp-281 lines the Zn(2+) pocket. Asp-282 serves as a coordination point for substrate.

Belongs to the metallo-dependent hydrolases superfamily. Adenosine and AMP deaminases family. Adenine deaminase type 2 subfamily. It depends on Zn(2+) as a cofactor.

The enzyme catalyses adenine + H2O + H(+) = hypoxanthine + NH4(+). Catalyzes the hydrolytic deamination of adenine to hypoxanthine. Plays an important role in the purine salvage pathway and in nitrogen catabolism. This is Adenine deaminase from Cupriavidus necator (strain ATCC 17699 / DSM 428 / KCTC 22496 / NCIMB 10442 / H16 / Stanier 337) (Ralstonia eutropha).